Here is a 244-residue protein sequence, read N- to C-terminus: Lactate utilization protein A (244 aa).

It belongs to the LutA/YkgE family.

Is involved in L-lactate degradation and allows cells to grow with lactate as the sole carbon source. This chain is Lactate utilization protein A, found in Oceanobacillus iheyensis (strain DSM 14371 / CIP 107618 / JCM 11309 / KCTC 3954 / HTE831).